Here is a 560-residue protein sequence, read N- to C-terminus: Long-chain-fatty-acid--CoA ligase (560 aa).

The protein belongs to the ATP-dependent AMP-binding enzyme family.

The catalysed reaction is a long-chain fatty acid + ATP + CoA = a long-chain fatty acyl-CoA + AMP + diphosphate. This chain is Long-chain-fatty-acid--CoA ligase (lcfA), found in Bacillus subtilis (strain 168).